Consider the following 189-residue polypeptide: Transcription factor FapR (189 aa).

The protein belongs to the FapR family.

Transcriptional factor involved in regulation of membrane lipid biosynthesis by repressing genes involved in fatty acid and phospholipid metabolism. This chain is Transcription factor FapR, found in Exiguobacterium sp. (strain ATCC BAA-1283 / AT1b).